The primary structure comprises 223 residues: Large ribosomal subunit protein uL3 (223 aa).

It belongs to the universal ribosomal protein uL3 family. Part of the 50S ribosomal subunit. Forms a cluster with proteins L14 and L19.

One of the primary rRNA binding proteins, it binds directly near the 3'-end of the 23S rRNA, where it nucleates assembly of the 50S subunit. This is Large ribosomal subunit protein uL3 from Cutibacterium acnes (strain DSM 16379 / KPA171202) (Propionibacterium acnes).